We begin with the raw amino-acid sequence, 395 residues long: ATP phosphoribosyltransferase regulatory subunit (395 aa).

The protein belongs to the class-II aminoacyl-tRNA synthetase family. HisZ subfamily. In terms of assembly, heteromultimer composed of HisG and HisZ subunits.

Its subcellular location is the cytoplasm. Its pathway is amino-acid biosynthesis; L-histidine biosynthesis; L-histidine from 5-phospho-alpha-D-ribose 1-diphosphate: step 1/9. Required for the first step of histidine biosynthesis. May allow the feedback regulation of ATP phosphoribosyltransferase activity by histidine. This is ATP phosphoribosyltransferase regulatory subunit from Pseudomonas entomophila (strain L48).